The chain runs to 801 residues: Elongation factor G, mitochondrial (801 aa).

The transit peptide at 1–62 directs the protein to the mitochondrion; it reads MRTPTLARLP…LSKHFQQRRN (62 aa). Positions 99-386 constitute a tr-type G domain; the sequence is SRVRNIGIAA…GVIDYLPNPS (288 aa). GTP contacts are provided by residues 108–115, 184–188, and 238–241; these read AHIDSGKT, DTPGH, and NKMD.

The protein belongs to the TRAFAC class translation factor GTPase superfamily. Classic translation factor GTPase family. EF-G/EF-2 subfamily.

The protein resides in the mitochondrion. It participates in protein biosynthesis; polypeptide chain elongation. Functionally, mitochondrial GTPase that catalyzes the GTP-dependent ribosomal translocation step during translation elongation. During this step, the ribosome changes from the pre-translocational (PRE) to the post-translocational (POST) state as the newly formed A-site-bound peptidyl-tRNA and P-site-bound deacylated tRNA move to the P and E sites, respectively. Catalyzes the coordinated movement of the two tRNA molecules, the mRNA and conformational changes in the ribosome. This Aspergillus niger (strain ATCC MYA-4892 / CBS 513.88 / FGSC A1513) protein is Elongation factor G, mitochondrial (mef1).